A 482-amino-acid chain; its full sequence is 2-succinylbenzoate--CoA ligase (482 aa).

It belongs to the ATP-dependent AMP-binding enzyme family. MenE subfamily.

The catalysed reaction is 2-succinylbenzoate + ATP + CoA = 2-succinylbenzoyl-CoA + AMP + diphosphate. The protein operates within quinol/quinone metabolism; 1,4-dihydroxy-2-naphthoate biosynthesis; 1,4-dihydroxy-2-naphthoate from chorismate: step 5/7. Its pathway is quinol/quinone metabolism; menaquinone biosynthesis. In terms of biological role, converts 2-succinylbenzoate (OSB) to 2-succinylbenzoyl-CoA (OSB-CoA). The polypeptide is 2-succinylbenzoate--CoA ligase (Bacillus cereus (strain ATCC 14579 / DSM 31 / CCUG 7414 / JCM 2152 / NBRC 15305 / NCIMB 9373 / NCTC 2599 / NRRL B-3711)).